Consider the following 228-residue polypeptide: 7-cyano-7-deazaguanine synthase (228 aa).

Residue 11-21 (LSGGLDSATCL) coordinates ATP. The Zn(2+) site is built by C191, C201, C204, and C207.

The protein belongs to the QueC family. Zn(2+) is required as a cofactor.

The catalysed reaction is 7-carboxy-7-deazaguanine + NH4(+) + ATP = 7-cyano-7-deazaguanine + ADP + phosphate + H2O + H(+). The protein operates within purine metabolism; 7-cyano-7-deazaguanine biosynthesis. Functionally, catalyzes the ATP-dependent conversion of 7-carboxy-7-deazaguanine (CDG) to 7-cyano-7-deazaguanine (preQ(0)). The protein is 7-cyano-7-deazaguanine synthase of Azoarcus sp. (strain BH72).